We begin with the raw amino-acid sequence, 229 residues long: Lactate utilization protein C (229 aa).

Belongs to the LutC/YkgG family.

Its function is as follows. Is involved in L-lactate degradation and allows cells to grow with lactate as the sole carbon source. The sequence is that of Lactate utilization protein C from Shouchella clausii (strain KSM-K16) (Alkalihalobacillus clausii).